Here is a 448-residue protein sequence, read N- to C-terminus: Rhodopsin (448 aa).

The Extracellular portion of the chain corresponds to 2–33 (GRDLRDNETWWYNPSIVVHPHWREFDQVPDAV). An N-linked (GlcNAc...) asparagine glycan is attached at Asn-8. The helical transmembrane segment at 34–58 (YYSLGIFIGICGIIGCGGNGIVIYL) threads the bilayer. Residues 59–70 (FTKTKSLQTPAN) lie on the Cytoplasmic side of the membrane. Residues 71–97 (MFIINLAFSDFTFSLVNGFPLMTISCF) form a helical membrane-spanning segment. Over 98 to 109 (LKKWIFGFAACK) the chain is Extracellular. Cys-108 and Cys-186 are disulfide-bonded. A helical membrane pass occupies residues 110-131 (VYGFIGGIFGFMSIMTMAMISI). The Cytoplasmic segment spans residues 132–151 (DRYNVIGRPMAASKKMSHRR). The chain crosses the membrane as a helical span at residues 152-172 (AFIMIIFVWLWSVLWAIGPIF). Residues 173–199 (GWGAYTLEGVLCNCSFDYISRDSTTRS) lie on the Extracellular side of the membrane. The chain crosses the membrane as a helical span at residues 200-224 (NILCMFILGFFGPILIIFFCYFNIV). At 225-261 (MSVSNHEKEMAAMAKRLNAKELRKAQAGANAEMRLAK) the chain is on the cytoplasmic side. A helical membrane pass occupies residues 262–283 (ISIVIVSQFLLSWSPYAVVALL). Topologically, residues 284 to 293 (AQFGPLEWVT) are extracellular. A helical transmembrane segment spans residues 294–315 (PYAAQLPVMFAKASAIHNPMIY). At Lys-305 the chain carries N6-(retinylidene)lysine. At 316 to 448 (SVSHPKFREA…QGVDNQAYQA (133 aa)) the chain is on the cytoplasmic side. S-palmitoyl cysteine attachment occurs at residues Cys-336 and Cys-337. Residues 343–352 (ETEDDKDAET) show a composition bias toward acidic residues. A disordered region spans residues 343–448 (ETEDDKDAET…QGVDNQAYQA (106 aa)). Low complexity predominate over residues 359-391 (SSDAAPSADAAQMKEMMAMMQKMQQQQAAYPPQ). Pro residues predominate over residues 392–437 (GYAPPPQGYPPQGYPPQGYPPQGYPPQGYPPPPQGAPPQGAPPAAP).

This sequence belongs to the G-protein coupled receptor 1 family. Opsin subfamily. Post-translationally, contains one covalently linked retinal chromophore. Upon light absorption, the covalently bound 11-cis-retinal is converted to all-trans-retinal. After hydrolysis of the Schiff base and release of the covalently bound all-trans-retinal, active rhodopsin is regenerated by binding of a fresh molecule of 11-cis-retinal. Retina, rhabdomere membrane of photoreceptor cells (at protein level).

The protein localises to the cell projection. It localises to the rhabdomere membrane. Functionally, photoreceptor required for image-forming vision at low light intensity. Light-induced isomerization of 11-cis to all-trans retinal triggers a conformational change that activates signaling via G-proteins. Signaling mediates the activation of phospholipase C. Subsequent receptor phosphorylation mediates displacement of the bound G-protein alpha subunit by arrestin and terminates signaling. This is Rhodopsin (RHO) from Todarodes pacificus (Japanese flying squid).